The following is a 276-amino-acid chain: Merozoite surface protein 2 (276 aa).

Positions 1-20 (MKVIKTLSIINFFIFVTFNI) are cleaved as a signal peptide. N-linked (GlcNAc...) asparagine glycans are attached at residues Asn-22 and Asn-36. Residues 44–202 (AESNPSTGAG…EQTESPELQS (159 aa)) form a polymorphic region region. The segment at 44-242 (AESNPSTGAG…CTDGNKENCG (199 aa)) is disordered. The segment covering 51–90 (GAGGSGSAGGSGSAGGSGSAGGSGSAGGSGSAGSGDGNGA) has biased composition (gly residues). 5 repeat units span residues 53-58 (GGSGSA), 59-64 (GGSGSA), 65-70 (GGSGSA), 71-76 (GGSGSA), and 77-82 (GGSGSA). Positions 53 to 82 (GGSGSAGGSGSAGGSGSAGGSGSAGGSGSA) are 5 X 6 AA tandem repeats of G-G-S-G-S-A. A compositionally biased stretch (low complexity) spans 91 to 127 (NPGADAERSPSTPATTTTTTTTNDAEASTSTSSENPN). 3 stretches are compositionally biased toward polar residues: residues 143-169 (KPNQ…NVPP), 176-187 (KSPTAQPEQAEN), and 194-204 (QTESPELQSAP). An N-linked (GlcNAc...) asparagine glycan is attached at Asn-153. Residue Asn-225 is glycosylated (N-linked (GlcNAc...) asparagine). The span at 229–238 (SQKECTDGNK) shows a compositional bias: basic and acidic residues. Cys-233 and Cys-241 are joined by a disulfide. N-linked (GlcNAc...) asparagine glycosylation occurs at Asn-250. Asn-250 carries the GPI-anchor amidated asparagine lipid modification. A propeptide spans 251 to 276 (SSNIASINKFVVLISATLVLSFAIFI) (removed in mature form).

The protein resides in the cell membrane. May play a role in the merozoite attachment to the erythrocyte. This Plasmodium falciparum (isolate 7G8) protein is Merozoite surface protein 2.